The chain runs to 620 residues: Altered inheritance of mitochondria protein 9, mitochondrial (620 aa).

Residues 1-35 constitute a mitochondrion transit peptide; that stretch reads MLSRVARNSSLLKQLPKLRQTTVLPVVLKNSIRFH.

This sequence belongs to the AIM9 family.

The protein localises to the mitochondrion. The protein is Altered inheritance of mitochondria protein 9, mitochondrial (AIM9) of Candida tropicalis (strain ATCC MYA-3404 / T1) (Yeast).